The sequence spans 378 residues: Transmembrane 6 superfamily member 2 (378 aa).

Helical transmembrane passes span 34–54 (LCVV…VYSL), 63–83 (PLYA…VIAL), 110–130 (IFIC…MAGA), 140–160 (LGLY…PGNI), 170–190 (PTFF…MRIF), 219–239 (LTLI…GLVV), 269–289 (MLMY…ALTF), 291–311 (GCSW…QAQF), and 332–352 (TWAT…LLAL). 2 consecutive EXPERA domains span residues 61–186 (YDPL…CWAG) and 217–351 (ADLT…HLLA).

The protein belongs to the TM6SF family.

Its subcellular location is the endoplasmic reticulum membrane. It localises to the endoplasmic reticulum-Golgi intermediate compartment membrane. Its function is as follows. Regulator of liver fat metabolism influencing triglyceride secretion and hepatic lipid droplet content. May function as sterol isomerase. This chain is Transmembrane 6 superfamily member 2 (Tm6sf2), found in Rattus norvegicus (Rat).